A 437-amino-acid polypeptide reads, in one-letter code: Phosphoglucosamine mutase (437 aa).

Residue serine 101 is the Phosphoserine intermediate of the active site. Positions 101, 234, 236, and 238 each coordinate Mg(2+). Position 101 is a phosphoserine (serine 101).

This sequence belongs to the phosphohexose mutase family. It depends on Mg(2+) as a cofactor. Activated by phosphorylation.

It catalyses the reaction alpha-D-glucosamine 1-phosphate = D-glucosamine 6-phosphate. Catalyzes the conversion of glucosamine-6-phosphate to glucosamine-1-phosphate. The polypeptide is Phosphoglucosamine mutase (Thermus thermophilus (strain ATCC 27634 / DSM 579 / HB8)).